We begin with the raw amino-acid sequence, 1041 residues long: Serine-repeat antigen protein 6 (1041 aa).

The N-terminal stretch at 1–34 (MIFFNFKLNRMICPIFFLYIINVLFTQYFIKCEG) is a signal peptide. Asn-84 carries N-linked (GlcNAc...) asparagine glycosylation. The span at 101 to 111 (KVVSSSESGKG) shows a compositional bias: low complexity. Residues 101 to 173 (KVVSSSESGK…TESSSETLNK (73 aa)) form a disordered region. The segment covering 114 to 149 (VSHTKVTSEGLSDTQPNVTQSVSSSTHTPGSLDSTM) has biased composition (polar residues). The N-linked (GlcNAc...) asparagine glycan is linked to Asn-130. Low complexity predominate over residues 150–168 (STEQHSSVSQSSLPTESSS). Residue Asn-459 is glycosylated (N-linked (GlcNAc...) asparagine). The segment at 500 to 577 (TLPSESPSES…GDTNYVYDFD (78 aa)) is disordered. Over residues 502–515 (PSESPSESSSKSDS) the composition is skewed to low complexity. Over residues 521 to 545 (NDKDKNEDKDDMSKNSKEEFKNDDK) the composition is skewed to basic and acidic residues. N-linked (GlcNAc...) asparagine glycosylation occurs at Asn-554. A compositionally biased stretch (low complexity) spans 564-574 (NINNGDTNYVY). Residue Asn-583 is glycosylated (N-linked (GlcNAc...) asparagine). Cys-654 is an active-site residue. Asn-684 carries N-linked (GlcNAc...) asparagine glycosylation. Active-site residues include His-820 and Asn-845. Asn-984 is a glycosylation site (N-linked (GlcNAc...) asparagine).

It belongs to the peptidase C1 family. Post-translationally, just prior to merozoite egress from host erythrocytes, proteolytically cleaved by SUB1 to generate the active 75kDa form.

Its subcellular location is the parasitophorous vacuole lumen. The protein localises to the parasitophorous vacuole membrane. Cysteine protease which plays an essential role in merozoite egress from host erythrocytes. May cleave host SPTB/beta spectrin and ANK1/ankyrin-1 which disrupts host erythrocyte actin cytoskeleton and leads to host erythrocyte cell membrane rupture. The protein is Serine-repeat antigen protein 6 of Plasmodium falciparum.